Reading from the N-terminus, the 482-residue chain is UDP-glucose 6-dehydrogenase 2 (482 aa).

Residues 8–13, D33, R38, 86–90, 127–128, and E163 each bind NAD(+); these read GAGYVG, VNTPT, and ST. Residues 159 to 163, 218 to 225, and 258 to 271 contribute to the substrate site; these read EFLAE, KLAANAFL, and RIGP…VGFG. The active-site Nucleophile is the C274. 274 to 277 contacts NAD(+); it reads CFQK. 336-337 serves as a coordination point for substrate; that stretch reads FK. Position 344 (R344) interacts with NAD(+). Position 395 is a phosphoserine (S395). R449 lines the substrate pocket.

Belongs to the UDP-glucose/GDP-mannose dehydrogenase family.

It catalyses the reaction UDP-alpha-D-glucose + 2 NAD(+) + H2O = UDP-alpha-D-glucuronate + 2 NADH + 3 H(+). The protein operates within nucleotide-sugar biosynthesis; UDP-alpha-D-glucuronate biosynthesis; UDP-alpha-D-glucuronate from UDP-alpha-D-glucose: step 1/1. Involved in the biosynthesis of UDP-glucuronic acid (UDP-GlcA), providing nucleotide sugars for cell-wall polymers. The polypeptide is UDP-glucose 6-dehydrogenase 2 (UGD2) (Oryza sativa subsp. japonica (Rice)).